The sequence spans 245 residues: Protein OXIDATIVE STRESS 3 LIKE 6 (245 aa).

Residues 46–90 (QIGIGLRMSNNNNKSPEESSDSSSSIGESSENEEEEEEDDAVSCQ) form a disordered region. The segment covering 75–86 (SENEEEEEEDDA) has biased composition (acidic residues). The short motif at 143–151 (NKRRRLVIA) is the Nuclear localization signal element. The interval 203-230 (DDHRKIMMMMKNKKELMAQTRSCFCLSS) is kinase-inducible domain (KID).

It localises to the nucleus. In terms of biological role, probable transcription factor. Promotes slightly the tolerance to cadmium (Cd) and to oxidizing chemicals (e.g. diamide). The sequence is that of Protein OXIDATIVE STRESS 3 LIKE 6 from Arabidopsis thaliana (Mouse-ear cress).